We begin with the raw amino-acid sequence, 386 residues long: Protein MGF 360-4L (386 aa).

Belongs to the asfivirus MGF 360 family.

In terms of biological role, plays a role in virus cell tropism, and may be required for efficient virus replication in macrophages. The sequence is that of Protein MGF 360-4L from African swine fever virus (isolate Warthog/Namibia/Wart80/1980) (ASFV).